Consider the following 675-residue polypeptide: Putative elongation factor TypA-like SVR3, chloroplastic (675 aa).

The N-terminal 58 residues, 1 to 58 (MELSLSTSSASPAVLRRQASPLLHKQQVLGVSFASALKPGGGALRFPSRRPLPRPITC), are a transit peptide targeting the chloroplast. The tract at residues 43–76 (ALRFPSRRPLPRPITCSASPSTAEPASEVKKKQL) is disordered. The span at 59–68 (SASPSTAEPA) shows a compositional bias: low complexity. Residues 80–275 (DNVRNIAIVA…AIIRCVPGPN (196 aa)) form the tr-type G domain.

The protein belongs to the TRAFAC class translation factor GTPase superfamily. Classic translation factor GTPase family. BipA subfamily.

It localises to the plastid. The protein localises to the chloroplast. Functionally, putative chloroplastic elongation factor involved in response to chilling stress. Required for proper chloroplast rRNA processing and/or translation at low temperature. Involved in plastid protein homeostasis. In Arabidopsis thaliana (Mouse-ear cress), this protein is Putative elongation factor TypA-like SVR3, chloroplastic (SVR3).